Reading from the N-terminus, the 287-residue chain is tRNA selenocysteine 1-associated protein 1 (287 aa).

RRM domains lie at 3 to 86 and 96 to 175; these read ASLW…YATY and YSLF…VAIP.

The protein belongs to the RRM TRSPAP family. As to quaternary structure, component of the tRNA(Sec) complex composed at least of EEFSEC, SECISBP2, SEPHS1, SEPSECS, TRNAU1AP and tRNA(Sec). Found in a complex with tRNA(Sec). Interacts with SEPSECS. Associates with mRNP and/or polysomes. Found in a complex with EEFSEC, SECISBP2, TRNAU1AP and tRNA(Sec).

The protein localises to the nucleus. Its subcellular location is the cytoplasm. Its function is as follows. Involved in the early steps of selenocysteine biosynthesis and tRNA(Sec) charging to the later steps resulting in the cotranslational incorporation of selenocysteine into selenoproteins. Stabilizes the SECISBP2, EEFSEC and tRNA(Sec) complex. May be involved in the methylation of tRNA(Sec). Enhances efficiency of selenoproteins synthesis. The chain is tRNA selenocysteine 1-associated protein 1 (TRNAU1AP) from Homo sapiens (Human).